A 235-amino-acid chain; its full sequence is MGQKVNPHGIRLGIVKPWSSTWFANTQDFASNLDGDFKVRKFLNKELANASVSRITIERPAKSIRVTIHTARPGIVIGKKGEDVEKLRNAVAKIAGVPAQINIAEVKKPELDAKLVADSIASQLERRVMFRRAMKRAVQNAMRLGAKGIKVEVSGRLGGAEIARSEWYREGRVPLHTLRADIDYNTSEAHTTYGVIGVKVWIFKGEILGGMAAIAQQPEQQPAAPKKAPRGKGRK.

Positions Val-39–Lys-107 constitute a KH type-2 domain.

Belongs to the universal ribosomal protein uS3 family. In terms of assembly, part of the 30S ribosomal subunit. Forms a tight complex with proteins S10 and S14.

In terms of biological role, binds the lower part of the 30S subunit head. Binds mRNA in the 70S ribosome, positioning it for translation. The sequence is that of Small ribosomal subunit protein uS3 from Mannheimia succiniciproducens (strain KCTC 0769BP / MBEL55E).